We begin with the raw amino-acid sequence, 549 residues long: MTLASIRRGYHVIKTLLQYGLDDVLPPKMTPWYFTLARNSLFWIRNKHKDKSGGERLKLAMQELGPVYIKLGQMLSTRRDLLSDEWATELAMLQDKVPPFDGALARLAIEAELKAPIETFFDDFNETPLASASISQVHTATLKSNGKAVVLKVLRPNVETKIQADLLLMSQTAKVIDYLLGEGNRLRPAEVIEDYRVTILGELNLKLEALNAIKLRNNFIDSDALYIPYVYEEFCYPRLMVMERIYGIPVSDIVALKAQGTNFKLLAERGVELFFTQVFRDNFFHADMHPGNIFISRENPENPYYIGLDCGIMGTLSEVDKRYLAENFLAFFNRDYHRIAQLYIESGWVSEKTDLQAFEQAIKVVCEPMFNKPLDEISFGHVLLELFRTARHFDIVVQPQLVLLEKTLLYIEGLGRQLYPQLDLWQTAKPFLEQWMAEQVGPKAMFKKVSTKLPYWSDKLPEFPELIYDNLKLGRKLLSSQQQMLDKYLKYQQQAHKSNYLLITSAILLICGTLLFNQDATLLSPYVCLISGAVLWIIGWRSRPKNRKF.

The Protein kinase domain occupies 123-501; sequence DFNETPLASA…QQQAHKSNYL (379 aa). ATP contacts are provided by residues 129–137 and K152; that span reads LASASISQV. Catalysis depends on D287, which acts as the Proton acceptor. The next 2 membrane-spanning stretches (helical) occupy residues 498–518 and 520–540; these read SNYL…LFNQ and ATLL…IIGW.

This sequence belongs to the ABC1 family. UbiB subfamily.

The protein resides in the cell inner membrane. Its pathway is cofactor biosynthesis; ubiquinone biosynthesis [regulation]. Is probably a protein kinase regulator of UbiI activity which is involved in aerobic coenzyme Q (ubiquinone) biosynthesis. The polypeptide is Probable protein kinase UbiB (Shewanella oneidensis (strain ATCC 700550 / JCM 31522 / CIP 106686 / LMG 19005 / NCIMB 14063 / MR-1)).